The following is a 724-amino-acid chain: Probable ATP-dependent RNA helicase DDX4 (724 aa).

A disordered region spans residues 1–246 (MGDEDWEAEI…SDTQGPKVTY (246 aa)). Over residues 30–42 (NGDNFNRTPASSS) the composition is skewed to polar residues. Basic and acidic residues predominate over residues 69 to 78 (DAGECNKRDN). Residues 150 to 162 (RGSFRGCRGGFGL) show a composition bias toward gly residues. Residues 195–205 (GDTSQSRSGSG) show a composition bias toward low complexity. Phosphoserine is present on residues serine 222 and serine 226. The segment at 228–247 (KSEAEGGESSDTQGPKVTYI) is interaction with RANBP9. Residues 288 to 316 (LTFEEANLCQTLNNNIAKAGYTKLTPVQK) carry the Q motif motif. A Helicase ATP-binding domain is found at 319 to 502 (IPIILAGRDL…AEFLKSNYLF (184 aa)). 332–339 (AQTGSGKT) serves as a coordination point for ATP. The short motif at 446 to 449 (DEAD) is the DEAD box element. The Helicase C-terminal domain maps to 530–675 (KLVEILRNIG…DVPAWLEEIA (146 aa)). Polar residues predominate over residues 704–715 (LNTAGFSSSQAP). A disordered region spans residues 704-724 (LNTAGFSSSQAPNPVDDESWD). Residue serine 722 is modified to Phosphoserine.

This sequence belongs to the DEAD box helicase family. DDX4/VASA subfamily. In terms of assembly, found in a mRNP complex, at least composed of TDRD1, TDRD6, TDRD7 and DDX4. Interacts with RANBP9. Interacts with RANBP10. Interacts with PIWIL2 and MAEL. Interacts with BMAL1 and CLOCK. Interacts with Tex19.1 and, probably, Tex19.2. Interacts with RBM46. In terms of tissue distribution, expressed only in ovary and testis. Expressed in migratory primordial germ cells in the region of the gonadal ridge in both sexes.

Its subcellular location is the cytoplasm. It localises to the perinuclear region. It catalyses the reaction ATP + H2O = ADP + phosphate + H(+). Its function is as follows. ATP-dependent RNA helicase required during spermatogenesis. Required to repress transposable elements and preventing their mobilization, which is essential for the germline integrity. Acts via the piRNA metabolic process, which mediates the repression of transposable elements during meiosis by forming complexes composed of piRNAs and Piwi proteins and governs the methylation and subsequent repression of transposons. Involved in the secondary piRNAs metabolic process, the production of piRNAs in fetal male germ cells through a ping-pong amplification cycle. Required for PIWIL2 slicing-triggered piRNA biogenesis: helicase activity enables utilization of one of the slice cleavage fragments generated by PIWIL2 and processing these pre-piRNAs into piRNAs. The chain is Probable ATP-dependent RNA helicase DDX4 (DDX4) from Homo sapiens (Human).